Reading from the N-terminus, the 563-residue chain is 2-isopropylmalate synthase (563 aa).

Residues 31–305 enclose the Pyruvate carboxyltransferase domain; the sequence is PIWMSTDLRD…DPGLDFAQIN (275 aa). Residues Asp40, His244, His246, and Asn280 each coordinate Mg(2+). A regulatory domain region spans residues 437 to 563; it reads RAEPIEYLSH…EWARLCGGAE (127 aa).

The protein belongs to the alpha-IPM synthase/homocitrate synthase family. LeuA type 2 subfamily. Homodimer. Requires Mg(2+) as cofactor.

It is found in the cytoplasm. The enzyme catalyses 3-methyl-2-oxobutanoate + acetyl-CoA + H2O = (2S)-2-isopropylmalate + CoA + H(+). The protein operates within amino-acid biosynthesis; L-leucine biosynthesis; L-leucine from 3-methyl-2-oxobutanoate: step 1/4. In terms of biological role, catalyzes the condensation of the acetyl group of acetyl-CoA with 3-methyl-2-oxobutanoate (2-ketoisovalerate) to form 3-carboxy-3-hydroxy-4-methylpentanoate (2-isopropylmalate). The polypeptide is 2-isopropylmalate synthase (Parvibaculum lavamentivorans (strain DS-1 / DSM 13023 / NCIMB 13966)).